A 261-amino-acid chain; its full sequence is Ethanolamine ammonia-lyase small subunit (261 aa).

3 residues coordinate adenosylcob(III)alamin: V157, E178, and C207.

Belongs to the EutC family. In terms of assembly, the basic unit is a heterodimer which dimerizes to form tetramers. The heterotetramers trimerize; 6 large subunits form a core ring with 6 small subunits projecting outwards. Requires adenosylcob(III)alamin as cofactor.

Its subcellular location is the bacterial microcompartment. It carries out the reaction ethanolamine = acetaldehyde + NH4(+). Its pathway is amine and polyamine degradation; ethanolamine degradation. Its function is as follows. Catalyzes the deamination of various vicinal amino-alcohols to oxo compounds. Allows this organism to utilize ethanolamine as the sole source of nitrogen and carbon in the presence of external vitamin B12. The protein is Ethanolamine ammonia-lyase small subunit of Rhodopseudomonas palustris (strain BisA53).